The sequence spans 316 residues: Ribosomal RNA small subunit methyltransferase H (316 aa).

S-adenosyl-L-methionine is bound by residues 37-39, Asp-56, Phe-83, Asp-106, and His-113; that span reads GGH. The tract at residues 276-316 is disordered; the sequence is PILPSEEETKENPASRSAKLRVLRKTKSADKKYKKENSKEE. The span at 302–316 shows a compositional bias: basic and acidic residues; the sequence is KSADKKYKKENSKEE.

This sequence belongs to the methyltransferase superfamily. RsmH family.

It localises to the cytoplasm. It carries out the reaction cytidine(1402) in 16S rRNA + S-adenosyl-L-methionine = N(4)-methylcytidine(1402) in 16S rRNA + S-adenosyl-L-homocysteine + H(+). Its function is as follows. Specifically methylates the N4 position of cytidine in position 1402 (C1402) of 16S rRNA. The chain is Ribosomal RNA small subunit methyltransferase H from Leptospira borgpetersenii serovar Hardjo-bovis (strain L550).